Consider the following 320-residue polypeptide: tRNA uridine(34) hydroxylase (320 aa).

Residues 123–217 (EDENTVILDA…YGKDPETKGL (95 aa)) form the Rhodanese domain. Catalysis depends on cysteine 177, which acts as the Cysteine persulfide intermediate.

The protein belongs to the TrhO family.

The enzyme catalyses uridine(34) in tRNA + AH2 + O2 = 5-hydroxyuridine(34) in tRNA + A + H2O. Its function is as follows. Catalyzes oxygen-dependent 5-hydroxyuridine (ho5U) modification at position 34 in tRNAs. In Staphylococcus epidermidis (strain ATCC 35984 / DSM 28319 / BCRC 17069 / CCUG 31568 / BM 3577 / RP62A), this protein is tRNA uridine(34) hydroxylase.